Consider the following 290-residue polypeptide: Pyridoxal kinase PdxY (290 aa).

Ser-14 serves as a coordination point for substrate. Asp-116 and Glu-153 together coordinate ATP. A substrate-binding site is contributed by Asp-226.

This sequence belongs to the pyridoxine kinase family. PdxY subfamily. Homodimer. Mg(2+) serves as cofactor.

It carries out the reaction pyridoxal + ATP = pyridoxal 5'-phosphate + ADP + H(+). It functions in the pathway cofactor metabolism; pyridoxal 5'-phosphate salvage; pyridoxal 5'-phosphate from pyridoxal: step 1/1. Pyridoxal kinase involved in the salvage pathway of pyridoxal 5'-phosphate (PLP). Catalyzes the phosphorylation of pyridoxal to PLP. This chain is Pyridoxal kinase PdxY, found in Rubrobacter xylanophilus (strain DSM 9941 / JCM 11954 / NBRC 16129 / PRD-1).